The sequence spans 660 residues: Protein NEDD1 (660 aa).

WD repeat units lie at residues 1 to 31 (MQEN…FNPH), 32 to 71 (TSPH…PVPL), 75 to 114 (AEGQ…VHRS), 117 to 156 (DHKD…SSTP), 160 to 200 (GSNQ…PYHN), 204 to 244 (VHKA…LVKT), 246 to 285 (VADT…SPVK), and 289 to 332 (AHKT…NAAS). Serine 325 carries the phosphoserine modification. Positions 369–411 (QEKAGLPRSINTDTLSKETDSGKNQDFSSFDDTGKSSLGDMFS) are disordered. Threonine 382 carries the post-translational modification Phosphothreonine; by PLK1. Phosphoserine; by PLK1 is present on serine 397. Position 411 is a phosphoserine (serine 411). Serine 426 bears the Phosphoserine; by PLK1 mark. Phosphoserine occurs at positions 468 and 516. Positions 507–523 (GAESGNLNTSPSSNQTR) are enriched in polar residues. A disordered region spans residues 507–532 (GAESGNLNTSPSSNQTRNSEKFEKPE). Threonine 550 bears the Phosphothreonine; by CDK1 mark. A Phosphoserine; by PLK1 modification is found at serine 637.

In terms of assembly, interacts with FAM29A. Interacts with HSPA1A and HSPA1B. Interacts with gamma-tubulin in a HSPA1A/B-dependent manner. In terms of processing, during mitosis, prior phosphorylation on Thr-550 by CDK1 promotes subsequent phosphorylation by PLK1 on Thr-382, Ser-397, Ser-426 and Ser-637. Phosphorylated NEDD1 can interact with gamma-tubulin for targeting the gamma-tubulin ring complex (gTuRC) to the centrosome, an important step for spindle formation.

The protein resides in the cytoplasm. It is found in the cytoskeleton. Its subcellular location is the microtubule organizing center. It localises to the centrosome. Required for mitosis progression. Promotes the nucleation of microtubules from the spindle. This Homo sapiens (Human) protein is Protein NEDD1 (NEDD1).